The chain runs to 85 residues: MNLYESCVRGALRAYKLTLSPLIGRQCRFFPTCSEYAAEALIGHGPVRGSWLTVRRLCRCHPWGPSGWDPPPPPRRKGAKWTCET.

This sequence belongs to the UPF0161 family.

It localises to the cell inner membrane. Could be involved in insertion of integral membrane proteins into the membrane. This chain is Putative membrane protein insertion efficiency factor, found in Phenylobacterium zucineum (strain HLK1).